Here is a 220-residue protein sequence, read N- to C-terminus: tRNA (guanine-N(7)-)-methyltransferase (220 aa).

S-adenosyl-L-methionine is bound by residues E46, D71, D100, and D122. Residue D122 is part of the active site. Substrate is bound by residues K126, D158, and 196–199 (TEYE).

It belongs to the class I-like SAM-binding methyltransferase superfamily. TrmB family.

It carries out the reaction guanosine(46) in tRNA + S-adenosyl-L-methionine = N(7)-methylguanosine(46) in tRNA + S-adenosyl-L-homocysteine. Its pathway is tRNA modification; N(7)-methylguanine-tRNA biosynthesis. Its function is as follows. Catalyzes the formation of N(7)-methylguanine at position 46 (m7G46) in tRNA. The polypeptide is tRNA (guanine-N(7)-)-methyltransferase (Malacoplasma penetrans (strain HF-2) (Mycoplasma penetrans)).